Here is a 699-residue protein sequence, read N- to C-terminus: uncharacterized protein (699 aa).

Disordered stretches follow at residues 175 to 208, 289 to 364, and 539 to 603; these read PTLG…ASLS, PTAK…EEPD, and RAKE…KEYL. Basic and acidic residues predominate over residues 183-194; the sequence is PSKHGDHSDSKT. Positions 195–208 are enriched in polar residues; the sequence is YESPISNSQAASLS. The segment covering 308 to 322 has biased composition (basic residues); that stretch reads SKHKKRPKRLSKFKQ. The span at 323–338 shows a compositional bias: basic and acidic residues; sequence AKLETKKSGNKDHATS. Polar residues-rich tracts occupy residues 339-360 and 548-573; these read SEKL…SSSI and HSNA…NTKL. The span at 574-603 shows a compositional bias: basic and acidic residues; that stretch reads NPKEEDKSTVESELKAPPKEKSSETSKEYL.

The protein localises to the cytoplasm. This is an uncharacterized protein from Schizosaccharomyces pombe (strain 972 / ATCC 24843) (Fission yeast).